The chain runs to 319 residues: Ninja-family protein Os07g0602900 (319 aa).

3 disordered regions span residues M1–G26, L69–Y152, and A181–R234. Over residues P70–G79 the composition is skewed to gly residues. Residues E105–L118 are compositionally biased toward basic and acidic residues. Residues D185–N196 are compositionally biased toward polar residues. Low complexity predominate over residues L225–R234.

The protein belongs to the Ninja family.

It is found in the nucleus. The polypeptide is Ninja-family protein Os07g0602900 (Oryza sativa subsp. japonica (Rice)).